We begin with the raw amino-acid sequence, 305 residues long: Porphobilinogen deaminase (305 aa).

Cys-243 carries the S-(dipyrrolylmethanemethyl)cysteine modification.

This sequence belongs to the HMBS family. As to quaternary structure, monomer. Dipyrromethane serves as cofactor.

It carries out the reaction 4 porphobilinogen + H2O = hydroxymethylbilane + 4 NH4(+). The protein operates within porphyrin-containing compound metabolism; protoporphyrin-IX biosynthesis; coproporphyrinogen-III from 5-aminolevulinate: step 2/4. Functionally, tetrapolymerization of the monopyrrole PBG into the hydroxymethylbilane pre-uroporphyrinogen in several discrete steps. This chain is Porphobilinogen deaminase, found in Limosilactobacillus reuteri (strain DSM 20016) (Lactobacillus reuteri).